The primary structure comprises 361 residues: BBSome complex member bbs-5 (361 aa).

It belongs to the BBS5 family. Part of BBSome complex, that contains at least bbs-1, bbs-2, bbs-4, bbs-5, osm-12, bbs-8/ttc-8 and bbs-9. Interacts with bbs-4 (via C-terminus); the interaction is direct.

Its subcellular location is the cell projection. The protein localises to the cilium membrane. It localises to the cytoplasm. It is found in the cytoskeleton. The protein resides in the cilium basal body. Its subcellular location is the microtubule organizing center. The protein localises to the centrosome. It localises to the centriolar satellite. Component of the BBSome complex. The BBSome complex is thought to function as a coat complex required for sorting of specific membrane proteins to the primary cilia. The BBSome complex is required for ciliogenesis but is dispensable for centriolar satellite function. Required for BBSome complex ciliary localization but not for the proper complex assembly. Required, redundantly with bbs-4, for cilia biogenesis and both the assembly and movement of intraflagellar transport proteins along the ciliary axoneme. Plays a role in the removal of degraded mechanosensory receptors within the cilia. The chain is BBSome complex member bbs-5 from Caenorhabditis elegans.